The following is a 756-amino-acid chain: Amine oxidase [copper-containing] 2 (756 aa).

Topologically, residues 1–4 (MHLK) are cytoplasmic. The helical transmembrane segment at 5 to 25 (IVLAFLALSLITIFALAYVLL) threads the bilayer. Topologically, residues 26–756 (TSPGGSSQPP…DLPPFSYHGF (731 aa)) are extracellular. N133, N198, and N226 each carry an N-linked (GlcNAc...) asparagine glycan. D380 serves as the catalytic Proton acceptor. A disulfide bond links C398 and C424. Y465 functions as the Schiff-base intermediate with substrate; via topaquinone in the catalytic mechanism. At Y465 the chain carries 2',4',5'-topaquinone. Cu(2+) contacts are provided by H516 and H518. Ca(2+) is bound by residues D525, L526, D527, E568, E637, F659, and N661. N662 carries an N-linked (GlcNAc...) asparagine glycan. Ca(2+) is bound by residues E663, D669, and L670. H680 lines the Cu(2+) pocket. C730 and C737 are oxidised to a cystine.

This sequence belongs to the copper/topaquinone oxidase family. As to quaternary structure, homodimer; disulfide-linked. Probably forms heterodimers with AOC3. Requires Cu(2+) as cofactor. It depends on Ca(2+) as a cofactor. L-topaquinone serves as cofactor. Post-translationally, topaquinone (TPQ) is generated by copper-dependent autoxidation of a specific tyrosyl residue. As to expression, expressed in many tissues including adipocytes with higher expression in retina where it is active. Not expressed in testis. In terms of tissue distribution, not expressed in thymus.

The protein resides in the cell membrane. It localises to the cytoplasm. The enzyme catalyses 2-phenylethylamine + O2 + H2O = 2-phenylacetaldehyde + H2O2 + NH4(+). It carries out the reaction tryptamine + O2 + H2O = indole-3-acetaldehyde + H2O2 + NH4(+). The catalysed reaction is tyramine + O2 + H2O = (4-hydroxyphenyl)acetaldehyde + H2O2 + NH4(+). In terms of biological role, catalyzes the oxidative deamination of primary amines to the corresponding aldehydes with the concomitant production of hydrogen peroxide and ammonia. Has a preference for 2-phenylethylamine, tryptamine and tyramine. Could also act on methylamine and benzylamine but much less efficiently. This chain is Amine oxidase [copper-containing] 2, found in Homo sapiens (Human).